We begin with the raw amino-acid sequence, 280 residues long: Urease accessory protein UreD 1 (280 aa).

The protein belongs to the UreD family. As to quaternary structure, ureD, UreF and UreG form a complex that acts as a GTP-hydrolysis-dependent molecular chaperone, activating the urease apoprotein by helping to assemble the nickel containing metallocenter of UreC. The UreE protein probably delivers the nickel.

It is found in the cytoplasm. Required for maturation of urease via the functional incorporation of the urease nickel metallocenter. This chain is Urease accessory protein UreD 1, found in Brucella melitensis biotype 1 (strain ATCC 23456 / CCUG 17765 / NCTC 10094 / 16M).